The chain runs to 146 residues: Ribosome-binding factor A (146 aa).

The interval Glu-127–Ser-146 is disordered.

The protein belongs to the RbfA family. As to quaternary structure, monomer. Binds 30S ribosomal subunits, but not 50S ribosomal subunits or 70S ribosomes.

The protein localises to the cytoplasm. One of several proteins that assist in the late maturation steps of the functional core of the 30S ribosomal subunit. Associates with free 30S ribosomal subunits (but not with 30S subunits that are part of 70S ribosomes or polysomes). Required for efficient processing of 16S rRNA. May interact with the 5'-terminal helix region of 16S rRNA. The polypeptide is Ribosome-binding factor A (Renibacterium salmoninarum (strain ATCC 33209 / DSM 20767 / JCM 11484 / NBRC 15589 / NCIMB 2235)).